A 931-amino-acid chain; its full sequence is NEDD4-binding protein 1 (931 aa).

The region spanning 75 to 159 (GKAVRSAKEY…VQQFVKLFEN (85 aa)) is the KH-like domain. 3 disordered regions span residues 289 to 329 (MTSK…HNDS), 413 to 474 (QEWS…TQVD), and 547 to 571 (CTSAKSKTAVHQKSAGPSPVQNSHS). Basic and acidic residues-rich tracts occupy residues 290–309 (TSKERQSCKRRFSDAEESLP) and 319–329 (QEVKSVSHNDS). Residues 416 to 434 (SSKTPKTTNLRLGSNANSS) show a composition bias toward polar residues. Basic and acidic residues-rich tracts occupy residues 435–444 (HKLEDEDISC) and 456–467 (NETRTERHKARD). Polar residues predominate over residues 547–557 (CTSAKSKTAVH). An RNase NYN domain is found at 659–811 (LKHIIIDGSN…LGRNGPRLDD (153 aa)). Residues 841-863 (LFMHVPNPASSSQQPKNRAHGDH) are disordered. The segment at 884 to 931 (RSASETVWLREALIKIFPDYEQRQKIDKILADHPFMRDLNALSAMVLD) is coCUN.

The protein belongs to the N4BP1 family.

The protein localises to the cytoplasm. Its subcellular location is the cytosol. It is found in the nucleus. The protein resides in the nucleolus. It localises to the PML body. Potent suppressor of cytokine production that acts as a regulator of innate immune signaling and inflammation. Acts as a key negative regulator of select cytokine and chemokine responses elicited by TRIF-independent Toll-like receptors (TLRs), thereby limiting inflammatory cytokine responses to minor insults. Has ribonuclease activity. The polypeptide is NEDD4-binding protein 1 (Gallus gallus (Chicken)).